Here is a 204-residue protein sequence, read N- to C-terminus: 3-isopropylmalate dehydratase small subunit (204 aa).

It belongs to the LeuD family. LeuD type 1 subfamily. As to quaternary structure, heterodimer of LeuC and LeuD.

It catalyses the reaction (2R,3S)-3-isopropylmalate = (2S)-2-isopropylmalate. It participates in amino-acid biosynthesis; L-leucine biosynthesis; L-leucine from 3-methyl-2-oxobutanoate: step 2/4. Its function is as follows. Catalyzes the isomerization between 2-isopropylmalate and 3-isopropylmalate, via the formation of 2-isopropylmaleate. The sequence is that of 3-isopropylmalate dehydratase small subunit from Ruthia magnifica subsp. Calyptogena magnifica.